A 106-amino-acid chain; its full sequence is Neisseria hypothetical transcription factor (106 aa).

The 55-residue stretch at 26-80 (MRLFRVNKGWSQEELARQCGLDRTYVSAVERKRWNIALSNIEKMAAALGVAAYQL) folds into the HTH cro/C1-type domain. Residues 37–56 (QEELARQCGLDRTYVSAVER) constitute a DNA-binding region (H-T-H motif).

In terms of assembly, homodimer. Can interact with the dimeric form of the DNA mimic protein DMP19 with 1:1 stoichiometry.

The protein resides in the cytoplasm. Repressor activity is inhibited in the presence of the DNA mimic protein DMP19, which interacts with NHTF and prevents binding of NHTF to its DNA-binding sites. Its function is as follows. Transcriptional regulator probably involved in the response to nitrogen levels. Down-regulates its own expression as well as the expression of the downstream gene, glnD, which encodes the [Protein-PII] uridylyltransferase, a key enzyme in the nitrogen regulation system. Acts by binding to a specific palindromic DNA sequence (5'-TGTNANTNACA-3') in its 5'-untranslated region. In Neisseria meningitidis serogroup B (strain ATCC BAA-335 / MC58), this protein is Neisseria hypothetical transcription factor.